The following is a 563-amino-acid chain: Arginine--tRNA ligase (563 aa).

The short motif at 120–130 (PNIAKPFHIGH) is the 'HIGH' region element.

The protein belongs to the class-I aminoacyl-tRNA synthetase family. As to quaternary structure, monomer.

It is found in the cytoplasm. It carries out the reaction tRNA(Arg) + L-arginine + ATP = L-arginyl-tRNA(Arg) + AMP + diphosphate. The sequence is that of Arginine--tRNA ligase from Clostridium botulinum (strain Langeland / NCTC 10281 / Type F).